Reading from the N-terminus, the 101-residue chain is Small ribosomal subunit protein uS14 (101 aa).

This sequence belongs to the universal ribosomal protein uS14 family. As to quaternary structure, part of the 30S ribosomal subunit. Contacts proteins S3 and S10.

Its function is as follows. Binds 16S rRNA, required for the assembly of 30S particles and may also be responsible for determining the conformation of the 16S rRNA at the A site. The polypeptide is Small ribosomal subunit protein uS14 (Pseudomonas putida (strain W619)).